The sequence spans 509 residues: Maturase K (509 aa).

The protein belongs to the intron maturase 2 family. MatK subfamily.

The protein resides in the plastid. It localises to the chloroplast. Functionally, usually encoded in the trnK tRNA gene intron. Probably assists in splicing its own and other chloroplast group II introns. This is Maturase K from Nicotiana tomentosiformis (Tobacco).